We begin with the raw amino-acid sequence, 865 residues long: Aconitate hydratase B (865 aa).

Substrate contacts are provided by residues arginine 191, 244-246 (SSR), 414-416 (QDT), and serine 498. [4Fe-4S] cluster contacts are provided by cysteine 710, cysteine 769, and cysteine 772. Substrate-binding residues include arginine 791 and arginine 796.

The protein belongs to the aconitase/IPM isomerase family. In terms of assembly, monomer. [4Fe-4S] cluster serves as cofactor.

The catalysed reaction is citrate = D-threo-isocitrate. The enzyme catalyses (2S,3R)-3-hydroxybutane-1,2,3-tricarboxylate = 2-methyl-cis-aconitate + H2O. It functions in the pathway carbohydrate metabolism; tricarboxylic acid cycle; isocitrate from oxaloacetate: step 2/2. It participates in organic acid metabolism; propanoate degradation. Its function is as follows. Involved in the catabolism of short chain fatty acids (SCFA) via the tricarboxylic acid (TCA)(acetyl degradation route) and the 2-methylcitrate cycle I (propionate degradation route). Catalyzes the reversible isomerization of citrate to isocitrate via cis-aconitate. Also catalyzes the hydration of 2-methyl-cis-aconitate to yield (2R,3S)-2-methylisocitrate. The apo form of AcnB functions as a RNA-binding regulatory protein which regulates FliC synthesis via interaction with the ftsH transcript to decrease the intracellular levels of FtsH. The lower levels of FtsH protease activity then influence sigma-32, DnaK and ultimately FliC production. This is Aconitate hydratase B (acnB) from Salmonella typhimurium (strain LT2 / SGSC1412 / ATCC 700720).